A 116-amino-acid polypeptide reads, in one-letter code: Ferredoxin-like protein in nif region (116 aa).

Residues 2–29 (AYTITSQCISCKLCSSVCPTGAIKIAEN) form the 4Fe-4S ferredoxin-type domain. Iron-sulfur cluster is bound by residues Cys-9, Cys-12, Cys-15, and Cys-19.

This is Ferredoxin-like protein in nif region (fdxN) from Nostoc sp. (strain PCC 7120 / SAG 25.82 / UTEX 2576).